The sequence spans 256 residues: Phosphonates import ATP-binding protein PhnC (256 aa).

Residues 2-246 (LKVIQLDKTY…VLQHIYRQPD (245 aa)) enclose the ABC transporter domain. 35–42 (GPSGAGKT) contributes to the ATP binding site.

It belongs to the ABC transporter superfamily. Phosphonates importer (TC 3.A.1.9.1) family. As to quaternary structure, the complex is composed of two ATP-binding proteins (PhnC), two transmembrane proteins (PhnE) and a solute-binding protein (PhnD).

The protein resides in the cell membrane. It carries out the reaction phosphonate(out) + ATP + H2O = phosphonate(in) + ADP + phosphate + H(+). In terms of biological role, part of the ABC transporter complex PhnCDE involved in phosphonates import. Responsible for energy coupling to the transport system. The polypeptide is Phosphonates import ATP-binding protein PhnC (Lactiplantibacillus plantarum (strain ATCC BAA-793 / NCIMB 8826 / WCFS1) (Lactobacillus plantarum)).